A 189-amino-acid chain; its full sequence is Orotate phosphoribosyltransferase (189 aa).

5-phospho-alpha-D-ribose 1-diphosphate is bound by residues arginine 99, lysine 100, lysine 103, histidine 105, and 126 to 134 (EDVITTGGS). The orotate site is built by threonine 130 and arginine 158.

It belongs to the purine/pyrimidine phosphoribosyltransferase family. PyrE subfamily. Homodimer. Requires Mg(2+) as cofactor.

The catalysed reaction is orotidine 5'-phosphate + diphosphate = orotate + 5-phospho-alpha-D-ribose 1-diphosphate. Its pathway is pyrimidine metabolism; UMP biosynthesis via de novo pathway; UMP from orotate: step 1/2. Catalyzes the transfer of a ribosyl phosphate group from 5-phosphoribose 1-diphosphate to orotate, leading to the formation of orotidine monophosphate (OMP). The chain is Orotate phosphoribosyltransferase from Thermosynechococcus vestitus (strain NIES-2133 / IAM M-273 / BP-1).